The following is a 309-amino-acid chain: Ecto-ADP-ribosyltransferase 5 (309 aa).

The N-terminal stretch at 1-23 (MILEDLLMVLSCLSLHALWKVRA) is a signal peptide. Cysteines 43 and 259 form a disulfide. The 191-residue stretch at 63–253 (ALLRESWEAA…IVTLWSYDQT (191 aa)) folds into the TR mART core domain. An NAD(+)-binding site is contributed by tyrosine 100. Asparagine 102 carries N-linked (GlcNAc...) asparagine glycosylation. NAD(+) contacts are provided by arginine 161 and glutamine 181. Arginine 161 is an active-site residue. Residue serine 184 is part of the active site. N-linked (GlcNAc...) asparagine glycosylation occurs at asparagine 197. Serine 215 provides a ligand contact to NAD(+). Glutamate 222 is an active-site residue.

This sequence belongs to the Arg-specific ADP-ribosyltransferase family. Abundantly expressed in testis. Lower levels in cardiac and skeletal muscle.

Its subcellular location is the secreted. The protein resides in the membrane. The enzyme catalyses L-arginyl-[protein] + NAD(+) = N(omega)-(ADP-D-ribosyl)-L-arginyl-[protein] + nicotinamide + H(+). This Mus musculus (Mouse) protein is Ecto-ADP-ribosyltransferase 5 (Art5).